The primary structure comprises 452 residues: Ribulose bisphosphate carboxylase large chain (452 aa).

The propeptide occupies methionine 1–serine 2. Proline 3 is subject to N-acetylproline. The residue at position 14 (lysine 14) is an N6,N6,N6-trimethyllysine. Residues asparagine 123 and threonine 173 each contribute to the substrate site. Lysine 175 functions as the Proton acceptor in the catalytic mechanism. Lysine 177 provides a ligand contact to substrate. Mg(2+)-binding residues include lysine 201, aspartate 203, and glutamate 204. Lysine 201 bears the N6-carboxylysine mark. Histidine 294 functions as the Proton acceptor in the catalytic mechanism. Substrate contacts are provided by arginine 295, residue 327, and serine 379.

This sequence belongs to the RuBisCO large chain family. Type I subfamily. In terms of assembly, heterohexadecamer of 8 large chains and 8 small chains; disulfide-linked. The disulfide link is formed within the large subunit homodimers. Mg(2+) serves as cofactor. In terms of processing, the disulfide bond which can form in the large chain dimeric partners within the hexadecamer appears to be associated with oxidative stress and protein turnover.

The protein resides in the plastid. It localises to the chloroplast. The enzyme catalyses 2 (2R)-3-phosphoglycerate + 2 H(+) = D-ribulose 1,5-bisphosphate + CO2 + H2O. It catalyses the reaction D-ribulose 1,5-bisphosphate + O2 = 2-phosphoglycolate + (2R)-3-phosphoglycerate + 2 H(+). Its function is as follows. RuBisCO catalyzes two reactions: the carboxylation of D-ribulose 1,5-bisphosphate, the primary event in carbon dioxide fixation, as well as the oxidative fragmentation of the pentose substrate in the photorespiration process. Both reactions occur simultaneously and in competition at the same active site. In Salvadora persica (Toothbrush tree), this protein is Ribulose bisphosphate carboxylase large chain.